We begin with the raw amino-acid sequence, 406 residues long: Large ribosomal subunit protein uL4z (406 aa).

The disordered stretch occupies residues 56-95 (PYAVSKKAGHQTSAESWGTGRAVSRIPRVPGGGTHRAGQA).

This sequence belongs to the universal ribosomal protein uL4 family.

This chain is Large ribosomal subunit protein uL4z (RPL4A), found in Arabidopsis thaliana (Mouse-ear cress).